We begin with the raw amino-acid sequence, 427 residues long: Enolase (427 aa).

Gln162 is a (2R)-2-phosphoglycerate binding site. Glu204 functions as the Proton donor in the catalytic mechanism. The Mg(2+) site is built by Asp241, Glu283, and Asp310. Lys335, Arg364, Ser365, and Lys386 together coordinate (2R)-2-phosphoglycerate. The active-site Proton acceptor is the Lys335.

The protein belongs to the enolase family. Mg(2+) serves as cofactor.

Its subcellular location is the cytoplasm. The protein localises to the secreted. It localises to the cell surface. The enzyme catalyses (2R)-2-phosphoglycerate = phosphoenolpyruvate + H2O. Its pathway is carbohydrate degradation; glycolysis; pyruvate from D-glyceraldehyde 3-phosphate: step 4/5. Catalyzes the reversible conversion of 2-phosphoglycerate (2-PG) into phosphoenolpyruvate (PEP). It is essential for the degradation of carbohydrates via glycolysis. The chain is Enolase from Mycolicibacterium smegmatis (strain ATCC 700084 / mc(2)155) (Mycobacterium smegmatis).